The following is a 294-amino-acid chain: Bifunctional protein FolD (294 aa).

NADP(+) is bound by residues 171-173 (GRS), Ser196, and Ile237.

The protein belongs to the tetrahydrofolate dehydrogenase/cyclohydrolase family. As to quaternary structure, homodimer.

It catalyses the reaction (6R)-5,10-methylene-5,6,7,8-tetrahydrofolate + NADP(+) = (6R)-5,10-methenyltetrahydrofolate + NADPH. The catalysed reaction is (6R)-5,10-methenyltetrahydrofolate + H2O = (6R)-10-formyltetrahydrofolate + H(+). It participates in one-carbon metabolism; tetrahydrofolate interconversion. Its function is as follows. Catalyzes the oxidation of 5,10-methylenetetrahydrofolate to 5,10-methenyltetrahydrofolate and then the hydrolysis of 5,10-methenyltetrahydrofolate to 10-formyltetrahydrofolate. In Synechocystis sp. (strain ATCC 27184 / PCC 6803 / Kazusa), this protein is Bifunctional protein FolD.